A 510-amino-acid chain; its full sequence is Zinc finger protein 692 (510 aa).

Disordered regions lie at residues 1-20 (MAAS…RQLD) and 121-306 (WGPS…EDTA). A Phosphoserine modification is found at Ser161. Positions 163–172 (CDERAQEARM) are enriched in basic and acidic residues. The segment covering 188-201 (EDGEEEEEDEEEML) has biased composition (acidic residues). Ser225 is modified (phosphoserine). The segment covering 237-265 (APAPAAVPAPLASPSSSASSLGSGAPGPV) has biased composition (low complexity). Residues 278–297 (QADQQTEPLASPGSQAQSAL) are compositionally biased toward polar residues. 5 C2H2-type zinc fingers span residues 322 to 347 (LPCD…KYQH), 353 to 377 (FSCP…VKLH), 383 to 405 (YICE…RRIH), 411 to 433 (LQCE…RRKH), and 442 to 465 (FPCE…SKSH). Ser464 is subject to Phosphoserine.

This sequence belongs to the krueppel C2H2-type zinc-finger protein family. In terms of processing, phosphorylation at Ser-464 results in loss of DNA-binding activity.

The protein resides in the nucleus. May act as an transcriptional repressor for PCK1 gene expression, in turn may participate in the hepatic gluconeogenesis regulation through the activated AMPK signaling pathway. The protein is Zinc finger protein 692 of Bos taurus (Bovine).